A 92-amino-acid chain; its full sequence is MAPTEKKRTTRKKKDPDAPKRSLSAYMFFANENRDIVRAENPGISFGQVGKLLGEKWKALTPEDKIPYENKADTDKKRYEKEKAEYAKKNAA.

2 disordered regions span residues Met1–Arg21 and Glu63–Ala92. The HMG box DNA-binding region spans Pro19–Ala87.

The protein belongs to the NHP6 family. In terms of assembly, weakly associates with the stable SPT16-POB3 heterodimer to form the FACT complex.

Its subcellular location is the nucleus. It localises to the chromosome. In terms of biological role, DNA-binding protein that induces severe bending of DNA. Required for DNA-binding by the FACT complex, a general chromatin factor that acts to reorganize nucleosomes. The FACT complex is involved in multiple processes that require DNA as a template such as mRNA elongation, DNA replication and DNA repair. Also augments the fidelity of transcription by RNA polymerase III independently of any role in the FACT complex. This chain is Non-histone chromosomal protein 6 (NHP6), found in Debaryomyces hansenii (strain ATCC 36239 / CBS 767 / BCRC 21394 / JCM 1990 / NBRC 0083 / IGC 2968) (Yeast).